The following is a 448-amino-acid chain: Trigger factor (448 aa).

Residues 172–257 (GDRVTVDFVG…MKKIEWPHLP (86 aa)) enclose the PPIase FKBP-type domain.

The protein belongs to the FKBP-type PPIase family. Tig subfamily.

It is found in the cytoplasm. It catalyses the reaction [protein]-peptidylproline (omega=180) = [protein]-peptidylproline (omega=0). Functionally, involved in protein export. Acts as a chaperone by maintaining the newly synthesized protein in an open conformation. Functions as a peptidyl-prolyl cis-trans isomerase. The chain is Trigger factor from Paraburkholderia phymatum (strain DSM 17167 / CIP 108236 / LMG 21445 / STM815) (Burkholderia phymatum).